Here is a 2137-residue protein sequence, read N- to C-terminus: MVSQVLQLLRQGVWAALTGGWYHDPEQSKFTNSCHLYLWLFLLLLPLALHLAFPPNAIIVFFYCSAVTIFFTIIKLVSYRLHLMFDKGEVIQQKPSRKEEKPNKDKEAKGEHITNHRNPSNNRQIHNGKKEEASRNLSTPPLRCSSRGQSITSHHSSGPLELSAQETVEDLKGVILLEDHPIAPVSSTSPGIKVESLPASQAHMLETTTKSVIPVKPVATETLINGKGKERGGKGQPPLRHRSEGGLVDKGPLKKLPHLSLSQYDLLETDVSFQPWGSENSVLIPEPVSCPRGSIRERVQSKSPQDSLSSSCPQCDTIVAKPVEEPADTSCQVDTSCQGDLPLHQEVDSSDSEVAVTLIDTSQPGDPLSLHEPIKIVITMSSTPNSMTDLESSLHLRVVGTEKTSVKSDAEPTNPGAAGSPNAEQISIPVITLDLPEGGGGGVPCPEGNGSERTPERLKTRVSTNQCSGYGSGEGGNAIKDHSSSSREPWESVSRLTPDTGSESKVGKEGQTNLDPSSCKSSHEKRHARVLSVDSGTDVFLSKSSAEIVNDTEKTMPTSKSDLEAKEGQMPNESNFLEFVSLLESINTSKMTASSQLNGSAEQNEESGLLRDNCSQEKKEEILENEKPSGHSSKQGKPDLQSQDHTSTGPACTQPAKTTAFFQGNRQRQIIYRVTSQQDSSVLQVISGPETSVQEEISVDAMHVFIDEHGEIRSCYLKSGNQKEGPLQPLPSNNDCLSQAREMQVSSSSTTTSESQDPSSGDPAVSALQQQLLLMVARRTQSETPRHVSQDLEASSCSSTQGKFNREQFYKFIIFPGKWIKVWYDRLTLLALLDRTEDIKENVLAILLIVLVSLLGFLTLSQGFCKDMWVLLFCLVMASCQYSLLKSVQPDPASPIHGHNQIITYSRPIYFCVLCGLILLLDTGAKARHPPSYVVYGLKLFSPVFLQSARDYLIVFLYCFPAISLLGLFPQINTFCTYLLEQIDMLFFGGSAVSGITSAVYSVARSVLAAALLHAVCFSAVKEPWSMQHIPALFSAFCGLLVALSYHLSRQSSDPSVLMSFIQCRLFPKFLHQNLAESAADPLPKKMKDSVTDVLKWDLIVCAVVAVLSFAVSASTVFLSLRPFLSIVLFALAGAVGFVTHYVLPQLRKHHPWMWISHPILKNKEYHQREVRDVAHLMWFERLYVWLQCFEKYILYPALILNALTIDAFLISNHRRLGTHWDIFLMIIAGMKLLRTSFCNPVYQFINLSFTVIFFHFDYKDISESFLLDFFMVSILFSKLGDLLHKLQFVLTYVAPWQMAWGSSFHVFAQLFAIPHSAMLFFQTIATSIFSTPLSPFLGSVIFITSYVRPVKFWEKNYNTRRVDNSNTRLAVQIERDPGNDDNNLNSIFYEHLTRTLQESLCGDLVLGRWGNYSSGDCFILASDDLNAFVHLIEIGNGLVTFQLRGLEFRGTYCQQREVEAIMEGDEEDRGCCCCKPGHLPHLLSCNAAFHLRWLTWEITQTQYILEGYSILDNNAATMLQVFDLRRILIRYYIKSIIYYMVTSPKLLSWIKNESLLKSLQPFAKWHYIERDLAMFNINIDDDYVPCLQGITRASFCNVYLEWIQHCARKRQEPSTTLDSDEDSPLVTLSFALCTLGRRALGTAAHNMAISLDSFLYGLHVLFKGDFRITARDEWVFADMDLLHKVVAPAIRMSLKLHQDQFTCPDEYEDPAVLYEAIQSFEKKVVICHEGDPAWRGAVLSNKEELLTLRHVVDEGADEYKVIMLHRSFLSFKVIKVNKECVRGLWAGQQQELIFLRNRNPERGSIQNNKQVLRNLINSSCDQPLGYPMYVSPLTTSYLGTHRQLKNIWGGPITLDRIRTWFWTKWVRMRKDCNARQHSGGNIEDVDGGGAPTTGGNNAPSGGSQESSAEQPRKGGAQHGVSSCEGTQRTGRRKGRSQSVQAHSALSQRPPMLSSSGPILESRQTFLQTSTSVHELAQRLSGSRLSLHASATSLHSQPPPVTTTGHLSVRERAEALIRSSLGSSTSSTLSFLFGKRSFSSALVISGLSAAEGGNTSDTQSSSSVNIVMGPSARAASQATRHLSEPCEPPDATEQGQLHDRCLAEAVADTLGVVCRRASQEDMGLDDTASQQSVSDEQ.

2 consecutive transmembrane segments (helical) span residues 34–54 (CHLY…LAFP) and 57–77 (AIIV…IKLV). Disordered regions lie at residues 92 to 163 (QQKP…LELS), 225 to 251 (NGKG…VDKG), 402 to 530 (EKTS…HARV), and 545 to 572 (SAEI…QMPN). The span at 96 to 114 (SRKEEKPNKDKEAKGEHIT) shows a compositional bias: basic and acidic residues. Polar residues predominate over residues 116–125 (HRNPSNNRQI). Residue asparagine 136 is glycosylated (N-linked (GlcNAc...) asparagine). The segment covering 146 to 156 (SRGQSITSHHS) has biased composition (polar residues). Asparagine 449 carries N-linked (GlcNAc...) asparagine glycosylation. The segment covering 479–490 (IKDHSSSSREPW) has biased composition (basic and acidic residues). Residues 510-520 (GQTNLDPSSCK) show a composition bias toward polar residues. Asparagine 550, asparagine 572, asparagine 587, asparagine 598, and asparagine 613 each carry an N-linked (GlcNAc...) asparagine glycan. Residues 593-602 (ASSQLNGSAE) are compositionally biased toward polar residues. Positions 593 to 612 (ASSQLNGSAEQNEESGLLRD) are disordered. Disordered stretches follow at residues 621–655 (EILE…CTQP) and 740–763 (AREM…SGDP). Positions 630-655 (GHSSKQGKPDLQSQDHTSTGPACTQP) are enriched in polar residues. The span at 746-760 (SSSSTTTSESQDPSS) shows a compositional bias: low complexity. The next 13 helical transmembrane spans lie at 844-864 (LAIL…SQGF), 868-888 (MWVL…LKSV), 901-921 (QIIT…ILLL), 952-972 (YLIV…FPQI), 983-1003 (IDML…VYSV), 1029-1049 (HIPA…YHLS), 1099-1119 (LIVC…TVFL), 1124-1144 (FLSI…HYVL), 1193-1213 (YILY…LISN), 1237-1257 (SFCN…FFHF), 1265-1285 (SFLL…DLLH), 1302-1322 (GSSF…MLFF), and 1324-1344 (TIAT…VIFI). Asparagine 1412, asparagine 1553, and asparagine 1818 each carry an N-linked (GlcNAc...) asparagine glycan. The tract at residues 1876-1958 (RQHSGGNIED…RPPMLSSSGP (83 aa)) is disordered. Composition is skewed to polar residues over residues 1901-1910 (SGGSQESSAE), 1920-1929 (GVSSCEGTQR), and 1937-1958 (SQSV…SSGP). N-linked (GlcNAc...) asparagine glycosylation occurs at asparagine 2054.

Belongs to the pecanex family.

It is found in the membrane. Its function is as follows. May play a role in tumorigenesis of colorectal carcinomas with high microsatellite instability (MSI-H). This chain is Pecanex-like protein 2, found in Homo sapiens (Human).